The following is a 95-amino-acid chain: Aspartyl/glutamyl-tRNA(Asn/Gln) amidotransferase subunit C (95 aa).

Belongs to the GatC family. Heterotrimer of A, B and C subunits.

It catalyses the reaction L-glutamyl-tRNA(Gln) + L-glutamine + ATP + H2O = L-glutaminyl-tRNA(Gln) + L-glutamate + ADP + phosphate + H(+). It carries out the reaction L-aspartyl-tRNA(Asn) + L-glutamine + ATP + H2O = L-asparaginyl-tRNA(Asn) + L-glutamate + ADP + phosphate + 2 H(+). Functionally, allows the formation of correctly charged Asn-tRNA(Asn) or Gln-tRNA(Gln) through the transamidation of misacylated Asp-tRNA(Asn) or Glu-tRNA(Gln) in organisms which lack either or both of asparaginyl-tRNA or glutaminyl-tRNA synthetases. The reaction takes place in the presence of glutamine and ATP through an activated phospho-Asp-tRNA(Asn) or phospho-Glu-tRNA(Gln). The sequence is that of Aspartyl/glutamyl-tRNA(Asn/Gln) amidotransferase subunit C from Pelagibacter ubique (strain HTCC1062).